A 765-amino-acid chain; its full sequence is 5-methyltetrahydropteroyltriglutamate--homocysteine methyltransferase (765 aa).

5-methyltetrahydropteroyltri-L-glutamate is bound by residues 18–21 (REWK) and K114. L-homocysteine contacts are provided by residues 437–439 (IGS) and E490. L-methionine contacts are provided by residues 437–439 (IGS) and E490. W567 is a binding site for 5-methyltetrahydropteroyltri-L-glutamate. D605 provides a ligand contact to L-homocysteine. D605 provides a ligand contact to L-methionine. Residue E611 coordinates 5-methyltetrahydropteroyltri-L-glutamate. H647, C649, and E671 together coordinate Zn(2+). The active-site Proton donor is H700. C732 is a Zn(2+) binding site.

The protein belongs to the vitamin-B12 independent methionine synthase family. Zn(2+) is required as a cofactor.

The catalysed reaction is 5-methyltetrahydropteroyltri-L-glutamate + L-homocysteine = tetrahydropteroyltri-L-glutamate + L-methionine. Its pathway is amino-acid biosynthesis; L-methionine biosynthesis via de novo pathway; L-methionine from L-homocysteine (MetE route): step 1/1. Its function is as follows. Catalyzes the transfer of a methyl group from 5-methyltetrahydrofolate to homocysteine resulting in methionine formation. This Listeria monocytogenes serotype 4b (strain F2365) protein is 5-methyltetrahydropteroyltriglutamate--homocysteine methyltransferase.